We begin with the raw amino-acid sequence, 260 residues long: Phosphate import ATP-binding protein PstB 2 (260 aa).

The ABC transporter domain maps to 9–255; it reads IKVKDLSFYY…PLDSRTRDYV (247 aa). Residue 41-48 coordinates ATP; it reads GPSGCGKS.

This sequence belongs to the ABC transporter superfamily. Phosphate importer (TC 3.A.1.7) family. The complex is composed of two ATP-binding proteins (PstB), two transmembrane proteins (PstC and PstA) and a solute-binding protein (PstS).

The protein resides in the cell inner membrane. The catalysed reaction is phosphate(out) + ATP + H2O = ADP + 2 phosphate(in) + H(+). Functionally, part of the ABC transporter complex PstSACB involved in phosphate import. Responsible for energy coupling to the transport system. This Nostoc sp. (strain PCC 7120 / SAG 25.82 / UTEX 2576) protein is Phosphate import ATP-binding protein PstB 2.